Reading from the N-terminus, the 168-residue chain is UPF0304 protein MJECS11 (168 aa).

Belongs to the UPF0304 family.

The sequence is that of UPF0304 protein MJECS11 from Methanocaldococcus jannaschii (strain ATCC 43067 / DSM 2661 / JAL-1 / JCM 10045 / NBRC 100440) (Methanococcus jannaschii).